We begin with the raw amino-acid sequence, 441 residues long: Peroxisomal biogenesis factor 3 (441 aa).

The Peroxisomal portion of the chain corresponds to 1–17; that stretch reads MAPNQRSRSLLQRHRGK. The helical transmembrane segment at 18–39 threads the bilayer; the sequence is VLISLTGIAALFTTGSVVVFFV. The Cytoplasmic segment spans residues 40–441; that stretch reads KRWLYKQQLR…GVSSSFSFKP (402 aa).

The protein belongs to the peroxin-3 family. Interacts with MSP1; leading to inhibit the translocase activity of MSP1.

The protein localises to the peroxisome membrane. Its function is as follows. Involved in peroxisome biosynthesis. Acts as a regulator of MSP1 by inhibiting the ability of MSP1 to unfold target proteins. The protein is Peroxisomal biogenesis factor 3 (PEX3) of Saccharomyces cerevisiae (strain ATCC 204508 / S288c) (Baker's yeast).